We begin with the raw amino-acid sequence, 388 residues long: Single-stranded DNA-binding protein 3 (388 aa).

M1 is modified (N-acetylmethionine). The LisH domain maps to A16–K48. The tract at residues V101–V388 is disordered. The span at G126–N139 shows a compositional bias: pro residues. Asymmetric dimethylarginine is present on residues R155, R161, and R165. Composition is skewed to low complexity over residues M200–M209 and P250–G268. A compositionally biased stretch (pro residues) spans G272–P282. Residues A285–T296 are compositionally biased toward polar residues. Over residues G315 to G325 the composition is skewed to gly residues. Low complexity predominate over residues N346–P357. Residues S347, S352, and S355 each carry the phosphoserine modification. T360 is subject to Phosphothreonine. A compositionally biased stretch (polar residues) spans H373–V388. Residues S381 and S387 each carry the phosphoserine modification.

In terms of tissue distribution, highly expressed in all hematopoietic tissues, including spleen, lymph node, peripheral blood, bone marrow, thymus, and fetal liver, with highest expression in thymus and fetal liver. Expression is also high in heart, brain, kidney, and skeletal muscle.

It localises to the nucleus. Functionally, may be involved in transcription regulation of the alpha 2(I) collagen gene where it binds to the single-stranded polypyrimidine sequences in the promoter region. The sequence is that of Single-stranded DNA-binding protein 3 (SSBP3) from Homo sapiens (Human).